Here is a 1187-residue protein sequence, read N- to C-terminus: Nicotinate dehydrogenase subunit B (1187 aa).

A helical transmembrane segment spans residues 764–784 (WWFGSLAGVFGAALGMLATAL). Cytochrome c domains lie at 804–907 (AMLE…MSQT), 949–1057 (AQWN…SSLE), and 1075–1163 (VSLS…RHRF). Heme c contacts are provided by Cys-818, Cys-821, His-822, Cys-964, Cys-967, His-968, Cys-1088, Cys-1091, and His-1092.

It depends on Mo-molybdopterin cytosine dinucleotide as a cofactor.

It is found in the membrane. The catalysed reaction is 2 Fe(III)-[cytochrome] + nicotinate + H2O = 2 Fe(II)-[cytochrome] + 6-hydroxynicotinate + 2 H(+). It functions in the pathway cofactor degradation; nicotinate degradation. Subunit of the two-component enzyme NicAB that mediates nicotinate hydroxylation, the first step in the aerobic nicotinate degradation pathway. Mediates conversion of nicotinate into 6-hydroxynicotinate (6HNA). This is Nicotinate dehydrogenase subunit B (nicB) from Pseudomonas putida (strain ATCC 47054 / DSM 6125 / CFBP 8728 / NCIMB 11950 / KT2440).